Here is a 693-residue protein sequence, read N- to C-terminus: Elongation factor G (693 aa).

In terms of domain architecture, tr-type G spans 8–282 (EKTRNIGIMA…AVIDYLPSPL (275 aa)). Residues 17–24 (AHIDAGKT), 81–85 (DTPGH), and 135–138 (NKMD) each bind GTP.

It belongs to the TRAFAC class translation factor GTPase superfamily. Classic translation factor GTPase family. EF-G/EF-2 subfamily.

The protein resides in the cytoplasm. Functionally, catalyzes the GTP-dependent ribosomal translocation step during translation elongation. During this step, the ribosome changes from the pre-translocational (PRE) to the post-translocational (POST) state as the newly formed A-site-bound peptidyl-tRNA and P-site-bound deacylated tRNA move to the P and E sites, respectively. Catalyzes the coordinated movement of the two tRNA molecules, the mRNA and conformational changes in the ribosome. The protein is Elongation factor G of Staphylococcus aureus (strain Newman).